The primary structure comprises 1377 residues: Endoribonuclease Dicer homolog 2b (1377 aa).

Positions 1 to 15 are enriched in gly residues; the sequence is MGGPLTAAGGRGDGG. The segment at 1–30 is disordered; sequence MGGPLTAAGGRGDGGAKAVEPLRPPPPPDP. The Helicase ATP-binding domain maps to 41–222; that stretch reads ALERAVRGNT…HNYSKQISEI (182 aa). 54–61 provides a ligand contact to ATP; that stretch reads LETGSGKT. The DECH box motif lies at 163–166; that stretch reads DECH. The Helicase C-terminal domain maps to 388-561; the sequence is TLLQYRHMQD…DTYYRVESTP (174 aa). Residues 534-626 form the Dicer dsRNA-binding fold domain; it reads SLRLGSISCQ…LPELDVPCDE (93 aa). Residues 798–913 form the PAZ domain; it reads RDIDLLQTKD…LPPELCRIIM (116 aa). RNase III domains lie at 940–1095 and 1132–1276; these read SVKL…STAG and VRSL…LDSK. Glu1171, Asp1262, and Glu1265 together coordinate Mg(2+). The DRBM domain occupies 1302-1367; the sequence is DPVKGLQEFC…SKAVLKDLIA (66 aa).

It belongs to the helicase family. Dicer subfamily. In terms of assembly, may interact with ARGONAUTE1 or PINHEAD through their common PAZ domains. Mg(2+) serves as cofactor. The cofactor is Mn(2+).

It is found in the nucleus. Its function is as follows. Probably involved in the RNA silencing pathway. May cleave double-stranded RNA to produce short 21-24 nucleotides (nt) RNAs which target the selective destruction of complementary RNAs. This Oryza sativa subsp. japonica (Rice) protein is Endoribonuclease Dicer homolog 2b (DCL2B).